A 476-amino-acid chain; its full sequence is Aspartyl/glutamyl-tRNA(Asn/Gln) amidotransferase subunit B (476 aa).

Belongs to the GatB/GatE family. GatB subfamily. In terms of assembly, heterotrimer of A, B and C subunits.

It carries out the reaction L-glutamyl-tRNA(Gln) + L-glutamine + ATP + H2O = L-glutaminyl-tRNA(Gln) + L-glutamate + ADP + phosphate + H(+). It catalyses the reaction L-aspartyl-tRNA(Asn) + L-glutamine + ATP + H2O = L-asparaginyl-tRNA(Asn) + L-glutamate + ADP + phosphate + 2 H(+). Functionally, allows the formation of correctly charged Asn-tRNA(Asn) or Gln-tRNA(Gln) through the transamidation of misacylated Asp-tRNA(Asn) or Glu-tRNA(Gln) in organisms which lack either or both of asparaginyl-tRNA or glutaminyl-tRNA synthetases. The reaction takes place in the presence of glutamine and ATP through an activated phospho-Asp-tRNA(Asn) or phospho-Glu-tRNA(Gln). This is Aspartyl/glutamyl-tRNA(Asn/Gln) amidotransferase subunit B from Variovorax paradoxus (strain S110).